The chain runs to 211 residues: Proline-rich 33 kDa extensin-related protein (211 aa).

Positions 1 to 14 are cleaved as a signal peptide; that stretch reads AILGVAIFAAPSLA. 2 stretches are compositionally biased toward pro residues: residues 25–59 and 82–93; these read PPVYTPPVHKPPIHKPPVYTPPVHKPPVYTPPVHK and HKPPVYKPPVQK. The interval 25–211 is disordered; it reads PPVYTPPVHK…RHPPVENTGN (187 aa). Basic residues-rich tracts occupy residues 101-111 and 127-139; these read PVHKPPIHKPP and PIHKPQPIHRPPV. Composition is skewed to basic and acidic residues over residues 142–159 and 167–177; these read PPTEHKPPVHEPATEHKP and KTEKPVPEHKP. Over residues 179 to 198 the composition is skewed to pro residues; the sequence is HLPPIVVRPPPTHKPNPPYG.

It belongs to the plant proline-rich protein superfamily. ENOD12 family.

It is found in the secreted. It localises to the cell wall. The polypeptide is Proline-rich 33 kDa extensin-related protein (Daucus carota (Wild carrot)).